A 185-amino-acid chain; its full sequence is MGRYSKEPRNPTKSCKARGSNLRVHFKNTRETAKTISKMPLRRAIKFLKNVKDQLECVPFRRYNGGVGRCAQAKQWGTTQGRWPRKSADFLLQLLKNAESNADYRGLDTDRLVIEHIQVNRAPRLRRRTYRAHGRINPYMSSPCHIEVILSERERVVAKPREDEPHKKKISKKKLARAKEKMLRE.

The segment at 158–185 (AKPREDEPHKKKISKKKLARAKEKMLRE) is disordered. Over residues 167 to 176 (KKKISKKKLA) the composition is skewed to basic residues.

It belongs to the universal ribosomal protein uL22 family.

The sequence is that of Large ribosomal subunit protein uL22 (RpL17) from Diaphorina citri (Asian citrus psyllid).